The following is a 448-amino-acid chain: Fibulin-5 (448 aa).

A signal peptide spans 1–23 (MPGFKRILTVTVLALCLPTPGNA). The EGF-like 1; calcium-binding domain maps to 42 to 82 (DVDECRTIPEACRGDMMCVNQNGGYLCIPRTNPVYRGPYSN). Cystine bridges form between Cys-46–Cys-59, Cys-53–Cys-68, Cys-131–Cys-144, Cys-138–Cys-153, Cys-155–Cys-166, Cys-172–Cys-181, Cys-177–Cys-190, Cys-192–Cys-205, Cys-211–Cys-221, Cys-217–Cys-230, Cys-232–Cys-245, Cys-251–Cys-262, Cys-258–Cys-271, Cys-273–Cys-286, Cys-292–Cys-305, Cys-299–Cys-314, and Cys-320–Cys-332. The Cell attachment site motif lies at 54-56 (RGD). An EGF-like 2; calcium-binding domain is found at 127–167 (DVDECATDSHQCNPTQICINTEGGYTCSCTDGYWLLEGQCL). In terms of domain architecture, EGF-like 3; calcium-binding spans 168–206 (DIDECRYGYCQQLCANVPGSYSCTCNPGFTLNEDGRSCQ). Residues 207–246 (DVNECATENPCVQTCVNTYGSFICRCDPGYELEDDGVHCS) enclose the EGF-like 4; calcium-binding domain. Residues 245 to 448 (CSDMDECSFS…LRIYVSQYPF (204 aa)) form an interaction with LOXL1 region. The EGF-like 5; calcium-binding domain occupies 247 to 287 (DMDECSFSEFLCQHECVNQPGTYFCSCPAGYILLDDNRSCQ). Residues Asn-283 and Asn-296 are each glycosylated (N-linked (GlcNAc...) asparagine). An EGF-like 6; calcium-binding domain is found at 288–333 (DINECEHRNHTCILQQTCYNLQGGFKCIDPIRCEEPYLRISDNRCM).

The protein belongs to the fibulin family. As to quaternary structure, homodimer. Monomer, homodimerizes in presence of Ca(2+). Interacts with ELN. Interacts (via N-terminus) with the integrins ITGAV/ITGB3, ITGAV/ITGB5 and ITGA9/ITGB1. Interacts with FBN1 (via N-terminal domain). Forms a ternary complex with ELN and FBN1. Interacts with EFEMP2 with moderate affinity. Interacts with LOXL1. Post-translationally, N-glycosylated.

It localises to the secreted. It is found in the extracellular space. The protein localises to the extracellular matrix. Functionally, essential for elastic fiber formation, is involved in the assembly of continuous elastin (ELN) polymer and promotes the interaction of microfibrils and ELN. Stabilizes and organizes elastic fibers in the skin, lung and vasculature. Promotes adhesion of endothelial cells through interaction of integrins and the RGD motif. Vascular ligand for integrin receptors which may play a role in vascular development and remodeling. May act as an adapter that mediates the interaction between FBN1 and ELN. This is Fibulin-5 (FBLN5) from Bos taurus (Bovine).